A 241-amino-acid chain; its full sequence is Sugar fermentation stimulation protein homolog (241 aa).

This sequence belongs to the SfsA family.

The polypeptide is Sugar fermentation stimulation protein homolog (Thermosynechococcus vestitus (strain NIES-2133 / IAM M-273 / BP-1)).